Consider the following 167-residue polypeptide: Leptin (167 aa).

The first 21 residues, 1–21 (MYWRTLWGFLWLWPYLFYIQA), serve as a signal peptide directing secretion. C117 and C167 are oxidised to a cystine.

Belongs to the leptin family.

It localises to the secreted. Functionally, key player in the regulation of energy balance and body weight control. Once released into the circulation, has central and peripheral effects by binding LEPR, found in many tissues, which results in the activation of several major signaling pathways. In the hypothalamus, acts as an appetite-regulating factor that induces a decrease in food intake and an increase in energy consumption by inducing anorexinogenic factors and suppressing orexigenic neuropeptides, also regulates bone mass and secretion of hypothalamo-pituitary-adrenal hormones. In the periphery, increases basal metabolism, influences reproductive function, regulates pancreatic beta-cell function and insulin secretion, is pro-angiogenic for endothelial cell and affects innate and adaptive immunity. In the arcuate nucleus of the hypothalamus, activates by depolarization POMC neurons inducing FOS and SOCS3 expression to release anorexigenic peptides and inhibits by hyperpolarization NPY neurons inducing SOCS3 with a consequent reduction on release of orexigenic peptides. In addition to its known satiety inducing effect, has a modulatory role in nutrient absorption. In the intestine, reduces glucose absorption by enterocytes by activating PKC and leading to a sequential activation of p38, PI3K and ERK signaling pathways which exerts an inhibitory effect on glucose absorption. Acts as a growth factor on certain tissues, through the activation of different signaling pathways increases expression of genes involved in cell cycle regulation such as CCND1, via JAK2-STAT3 pathway, or VEGFA, via MAPK1/3 and PI3K-AKT1 pathways. May also play an apoptotic role via JAK2-STAT3 pathway and up-regulation of BIRC5 expression. Pro-angiogenic, has mitogenic activity on vascular endothelial cells and plays a role in matrix remodeling by regulating the expression of matrix metalloproteinases (MMPs) and tissue inhibitors of metalloproteinases (TIMPs). In innate immunity, modulates the activity and function of neutrophils by increasing chemotaxis and the secretion of oxygen radicals. Increases phagocytosis by macrophages and enhances secretion of pro-inflammatory mediators. Increases cytotoxic ability of NK cells. Plays a pro-inflammatory role, in synergy with IL1B, by inducing NOS2 which promotes the production of IL6, IL8 and Prostaglandin E2, through a signaling pathway that involves JAK2, PI3K, MAP2K1/MEK1 and MAPK14/p38. In adaptive immunity, promotes the switch of memory T-cells towards T helper-1 cell immune responses. Increases CD4(+)CD25(-) T-cell proliferation and reduces autophagy during TCR (T-cell receptor) stimulation, through MTOR signaling pathway activation and BCL2 up-regulation. This chain is Leptin (LEP), found in Macaca mulatta (Rhesus macaque).